We begin with the raw amino-acid sequence, 355 residues long: GTP 3',8-cyclase (355 aa).

Residues 16–242 (RYGRRATDMR…PDPRARDGAP (227 aa)) enclose the Radical SAM core domain. GTP is bound at residue Arg25. [4Fe-4S] cluster-binding residues include Cys32 and Cys36. Tyr38 is a binding site for S-adenosyl-L-methionine. Residue Cys39 coordinates [4Fe-4S] cluster. Arg76 is a GTP binding site. Gly80 is a binding site for S-adenosyl-L-methionine. Position 107 (Thr107) interacts with GTP. Ser131 lines the S-adenosyl-L-methionine pocket. GTP is bound at residue Lys168. Met202 lines the S-adenosyl-L-methionine pocket. Residues Cys277 and Cys280 each coordinate [4Fe-4S] cluster. Residue 282 to 284 (RTR) coordinates GTP. Residue Cys294 participates in [4Fe-4S] cluster binding.

The protein belongs to the radical SAM superfamily. MoaA family. As to quaternary structure, monomer. [4Fe-4S] cluster is required as a cofactor.

The catalysed reaction is GTP + AH2 + S-adenosyl-L-methionine = (8S)-3',8-cyclo-7,8-dihydroguanosine 5'-triphosphate + 5'-deoxyadenosine + L-methionine + A + H(+). It participates in cofactor biosynthesis; molybdopterin biosynthesis. Functionally, catalyzes, together with MoaC, the conversion of 5'-GTP to cyclic pyranopterin monophosphate (cPMP or molybdopterin precursor Z). Its function is as follows. Catalyzes the cyclization of GTP to (8S)-3',8-cyclo-7,8-dihydroguanosine 5'-triphosphate. This chain is GTP 3',8-cyclase, found in Paenarthrobacter nicotinovorans (Arthrobacter nicotinovorans).